Consider the following 589-residue polypeptide: Leucine-rich repeat and immunoglobulin-like domain-containing nogo receptor-interacting protein 3 (589 aa).

An N-terminal signal peptide occupies residues 1 to 23; the sequence is MTCWLHMLGLHLLLLPTAPLAAG. Residues 24-53 enclose the LRRNT domain; sequence CPARCECSASTRTVACGRRRLTAIPEGIPA. Over 24–528 the chain is Extracellular; that stretch reads CPARCECSAS…LDLTTILVST (505 aa). 11 LRR repeats span residues 54 to 75, 78 to 99, 102 to 123, 126 to 147, 150 to 171, 174 to 195, 206 to 227, 246 to 267, 270 to 291, 294 to 315, and 318 to 339; these read ETRM…DLAS, TLEE…AFAN, RLRV…VFTH, SLTL…SFQD, SLQR…AFAG, GLAE…SLGH, HLAI…SHLE, NLTS…ALRQ, HLTC…SFRD, RLRE…AFVG, and QIRL…TFHS. Asparagine 184 carries N-linked (GlcNAc...) asparagine glycosylation. Residues asparagine 246, asparagine 256, and asparagine 275 are each glycosylated (N-linked (GlcNAc...) asparagine). A glycan (N-linked (GlcNAc...) asparagine) is linked at asparagine 323. The LRRCT domain occupies 351-405; that stretch reads NPLACDCRLLWIVQRRKTLNFDGRLPACATPAEVRGDALHNLPDSVLFEYFVCRK. Residues 406-495 enclose the Ig-like C2-type domain; it reads PKIRERRLQH…GNDTYFATLT (90 aa). Residues cysteine 428 and cysteine 479 are joined by a disulfide bond. 3 N-linked (GlcNAc...) asparagine glycosylation sites follow: asparagine 487, asparagine 501, and asparagine 509. A helical membrane pass occupies residues 529 to 549; the sequence is AMGCITFLGVVLFCFLLLFVW. Over 550 to 589 the chain is Cytoplasmic; sequence SRGRGQHKNNFSVEYSFRKVDGPAAAAGQGGARKFNMKMI.

It localises to the membrane. The protein is Leucine-rich repeat and immunoglobulin-like domain-containing nogo receptor-interacting protein 3 (Lingo3) of Mus musculus (Mouse).